Here is a 242-residue protein sequence, read N- to C-terminus: MTTVSMRDMLQAGVHFGHQTRYWNPKMKPFIFGARNGVHIINLEHTVPMFNEALAFISNVASKKGKILFVGTKRAASEAIKEAAVSCDQYYVDHRWLGGMLTNWKTVRQSIKRLKELETQSVDGTFDKLTKKEALMRTRELEKLEKSLGGIKNMGGLPDALFVIGADHEHIAIKEANNLGIPVVAVVDTNASPDGVNYIVPGNDDAMRAIRLYTEAAATAAKAGRGQDLAVQAEQDGFVEAE.

The protein belongs to the universal ribosomal protein uS2 family.

This Shewanella amazonensis (strain ATCC BAA-1098 / SB2B) protein is Small ribosomal subunit protein uS2.